A 144-amino-acid chain; its full sequence is Galectin a (144 aa).

One can recognise a Galectin domain in the interval 1 to 138 (DHIDLEFDVG…DAVLRKLCVV (138 aa)).

As to quaternary structure, tetramer.

Functionally, lectin that binds beta-galactoside and a wide array of complex carbohydrates. This Aplysina lactuca (Marine sponge) protein is Galectin a.